The primary structure comprises 348 residues: Protein RecA (348 aa).

Glycine 67 to threonine 74 is an ATP binding site.

Belongs to the RecA family.

Its subcellular location is the cytoplasm. Can catalyze the hydrolysis of ATP in the presence of single-stranded DNA, the ATP-dependent uptake of single-stranded DNA by duplex DNA, and the ATP-dependent hybridization of homologous single-stranded DNAs. It interacts with LexA causing its activation and leading to its autocatalytic cleavage. This Salinispora arenicola (strain CNS-205) protein is Protein RecA.